Here is a 460-residue protein sequence, read N- to C-terminus: Angiopoietin-related protein 3 (460 aa).

A signal peptide spans 1 to 16; the sequence is MFTIKLLLFIVPLVIS. Positions 17 to 165 are sufficient to inhibit LPL lipase activity; that stretch reads SRIDQDNSSF…PEHPEVTSLK (149 aa). The tract at residues 17-207 is sufficient to inhibit LIPG/EL phospholipase activity; that stretch reads SRIDQDNSSF…EIENQLRRTS (191 aa). A required for inhibition of LPL lipase activity region spans residues 32-56; that stretch reads EPKSRFAMLDDVKILANGLLQLGHG. A coiled-coil region spans residues 85–210; the sequence is LSLQTSEIKE…NQLRRTSIQE (126 aa). N115 is a glycosylation site (N-linked (GlcNAc...) asparagine). T226 is a glycosylation site (O-linked (GalNAc) threonine). The Fibrinogen C-terminal domain maps to 237-455; the sequence is VKHDGIPAEC…STKMLIHPTD (219 aa). A disulfide bond links C246 and C274. Residues N296 and N357 are each glycosylated (N-linked (GlcNAc...) asparagine). C394 and C408 are joined by a disulfide.

In terms of assembly, interacts with ANGPTL8. Interacts with ITGB3. O-glycosylated at Thr-226 by GALNT2; blocks processing and activation by proprotein convertases. Post-translationally, in part proteolytically cleaved by proprotein convertases; proposed to be involved in activation. Expressed principally in liver. Weakly expressed in kidney. Binds to adipocytes. Increased expression and colocalization with activated ITGB3 in glomeruli of patients with nephrotic syndrome showing effaced podocyte foot processes (at protein level).

The protein localises to the secreted. It is found in the cell projection. It localises to the lamellipodium. Functionally, acts in part as a hepatokine that is involved in regulation of lipid and glucose metabolism. Proposed to play a role in the trafficking of energy substrates to either storage or oxidative tissues in response to food intake. Has a stimulatory effect on plasma triglycerides (TG), which is achieved by suppressing plasma TG clearance via inhibition of LPL activity. The inhibition of LPL activity appears to be an indirect mechanism involving recruitment of proprotein convertases PCSK6 and FURIN to LPL leading to cleavage and dissociation of LPL from the cell surface; the function does not require ANGPTL3 proteolytic cleavage but seems to be mediated by the N-terminal domain, and is not inhibited by GPIHBP1. Can inhibit endothelial lipase, causing increased plasma levels of high density lipoprotein (HDL) cholesterol and phospholipids. Can bind to adipocytes to activate lipolysis, releasing free fatty acids and glycerol. Suppresses LPL specifically in oxidative tissues which is required to route very low density lipoprotein (VLDL)-TG to white adipose tissue (WAT) for storage in response to food; the function may involve cooperation with circulating, liver-derived ANGPTL8 and ANGPTL4 expression in WAT. Contributes to lower plasma levels of low density lipoprotein (LDL)-cholesterol by a mechanism that is independent of the canonical pathway implicating APOE and LDLR. May stimulate hypothalamic LPL activity. In vitro inhibits LPL activity; not effective on GPIHBP1-stabilized LPL. In terms of biological role, involved in angiogenesis. Binds to endothelial cells via integrin alpha-V/beta-3 (ITGAV:ITGB3), activates FAK, MAPK and Akt signaling pathways and induces cell adhesion and cell migration. Secreted from podocytes, may modulate properties of glomerular endothelial cells involving integrin alpha-V/beta-3 and Akt signaling. May increase the motility of podocytes. May induce actin filament rearrangements in podocytes implicating integrin alpha-V/beta-3 and Rac1 activation. Binds to hematopoietic stem cells (HSC) and is involved in the regulation of HSC activity probably implicating down-regulation of IKZF1/IKAROS. This Homo sapiens (Human) protein is Angiopoietin-related protein 3 (ANGPTL3).